We begin with the raw amino-acid sequence, 534 residues long: CTP synthase (534 aa).

The interval 1 to 267 (MTKYIFVTGG…DQIVCDHLKL (267 aa)) is amidoligase domain. S13 lines the CTP pocket. Position 13 (S13) interacts with UTP. An ATP-binding site is contributed by 14-19 (SIGKGI). Residue Y54 coordinates L-glutamine. Residue D71 participates in ATP binding. 2 residues coordinate Mg(2+): D71 and E141. CTP contacts are provided by residues 148 to 150 (DIE), 188 to 193 (KTKPTQ), and K224. Residues 188-193 (KTKPTQ) and K224 each bind UTP. 240–242 (RDV) provides a ligand contact to ATP. The region spanning 292–534 (KIALVGKYVE…FVTAAIKNSN (243 aa)) is the Glutamine amidotransferase type-1 domain. Residue G354 participates in L-glutamine binding. Residue C381 is the Nucleophile; for glutamine hydrolysis of the active site. Residues 382–385 (LGMQ), E405, and R463 contribute to the L-glutamine site. Active-site residues include H508 and E510.

The protein belongs to the CTP synthase family. Homotetramer.

The enzyme catalyses UTP + L-glutamine + ATP + H2O = CTP + L-glutamate + ADP + phosphate + 2 H(+). It carries out the reaction L-glutamine + H2O = L-glutamate + NH4(+). It catalyses the reaction UTP + NH4(+) + ATP = CTP + ADP + phosphate + 2 H(+). Its pathway is pyrimidine metabolism; CTP biosynthesis via de novo pathway; CTP from UDP: step 2/2. Its activity is regulated as follows. Allosterically activated by GTP, when glutamine is the substrate; GTP has no effect on the reaction when ammonia is the substrate. The allosteric effector GTP functions by stabilizing the protein conformation that binds the tetrahedral intermediate(s) formed during glutamine hydrolysis. Inhibited by the product CTP, via allosteric rather than competitive inhibition. Catalyzes the ATP-dependent amination of UTP to CTP with either L-glutamine or ammonia as the source of nitrogen. Regulates intracellular CTP levels through interactions with the four ribonucleotide triphosphates. The polypeptide is CTP synthase (Streptococcus pyogenes serotype M18 (strain MGAS8232)).